Consider the following 533-residue polypeptide: Histone-arginine methyltransferase CARMER (533 aa).

The SAM-dependent MTase PRMT-type domain maps to 143 to 452 (ASQYFQFYGY…QSYDVTIDLH (310 aa)). Glutamine 156, arginine 165, glycine 189, glutamate 211, glutamate 240, and threonine 268 together coordinate S-adenosyl-L-methionine. Asymmetric dimethylarginine; by autocatalysis is present on arginine 503.

It belongs to the class I-like SAM-binding methyltransferase superfamily. Protein arginine N-methyltransferase family. Homodimer. Post-translationally, the dimethylated protein is the major form.

The protein localises to the cytoplasm. Its subcellular location is the nucleus. The catalysed reaction is L-arginyl-[protein] + 2 S-adenosyl-L-methionine = N(omega),N(omega)-dimethyl-L-arginyl-[protein] + 2 S-adenosyl-L-homocysteine + 2 H(+). Methylates (mono- and asymmetric dimethylation) the guanidino nitrogens of arginyl residues in proteins. May methylate histone H3 at 'Arg-17' and activate transcription via chromatin remodeling. The protein is Histone-arginine methyltransferase CARMER (Art4) of Drosophila willistoni (Fruit fly).